A 108-amino-acid chain; its full sequence is Large ribosomal subunit protein uL24 (108 aa).

The protein belongs to the universal ribosomal protein uL24 family. In terms of assembly, part of the 50S ribosomal subunit.

In terms of biological role, one of two assembly initiator proteins, it binds directly to the 5'-end of the 23S rRNA, where it nucleates assembly of the 50S subunit. Functionally, one of the proteins that surrounds the polypeptide exit tunnel on the outside of the subunit. The chain is Large ribosomal subunit protein uL24 from Mycoplasmopsis synoviae (strain 53) (Mycoplasma synoviae).